Here is a 334-residue protein sequence, read N- to C-terminus: HTH-type transcriptional repressor PurR (334 aa).

The region spanning 2–56 (ATIKDVARLAGVSTTTVSHVINKTRFVAEATQEKVMKAVDELNYAPSAVARSLKC) is the HTH lacI-type domain. Positions 4–23 (IKDVARLAGVSTTTVSHVIN) form a DNA-binding region, H-T-H motif. Residues 48–56 (SAVARSLKC) mediate DNA binding. 4 residues coordinate hypoxanthine: phenylalanine 73, lysine 189, phenylalanine 220, and aspartate 274.

Homodimer.

It functions in the pathway purine metabolism; purine nucleotide biosynthesis [regulation]. Functionally, is the main repressor of the genes involved in the de novo synthesis of purine nucleotides, regulating purB, purC, purEK, purF, purHD, purL, purMN and guaBA expression. PurR is allosterically activated to bind its cognate DNA by binding the purine corepressors, hypoxanthine or guanine, thereby effecting transcription repression. The sequence is that of HTH-type transcriptional repressor PurR from Vibrio parahaemolyticus serotype O3:K6 (strain RIMD 2210633).